We begin with the raw amino-acid sequence, 276 residues long: Undecaprenyl-diphosphatase (276 aa).

The next 8 helical transmembrane spans lie at 1-21 (MELY…FLPV), 40-60 (ALSF…LVFF), 93-113 (VRLA…GLIL), 120-140 (LFSS…FLWL), 154-174 (IGFG…IPGI), 199-219 (FLLS…ESFA), 227-247 (VTLL…VALL), and 255-275 (FYLF…AGFV).

This sequence belongs to the UppP family.

The protein localises to the cell inner membrane. It catalyses the reaction di-trans,octa-cis-undecaprenyl diphosphate + H2O = di-trans,octa-cis-undecaprenyl phosphate + phosphate + H(+). Catalyzes the dephosphorylation of undecaprenyl diphosphate (UPP). Confers resistance to bacitracin. The protein is Undecaprenyl-diphosphatase of Desulforapulum autotrophicum (strain ATCC 43914 / DSM 3382 / VKM B-1955 / HRM2) (Desulfobacterium autotrophicum).